A 468-amino-acid polypeptide reads, in one-letter code: UDP-N-acetylmuramate--L-alanine ligase (468 aa).

An ATP-binding site is contributed by 114-120 (GTHGKTT).

This sequence belongs to the MurCDEF family.

The protein resides in the cytoplasm. It catalyses the reaction UDP-N-acetyl-alpha-D-muramate + L-alanine + ATP = UDP-N-acetyl-alpha-D-muramoyl-L-alanine + ADP + phosphate + H(+). It participates in cell wall biogenesis; peptidoglycan biosynthesis. Functionally, cell wall formation. This Methylocella silvestris (strain DSM 15510 / CIP 108128 / LMG 27833 / NCIMB 13906 / BL2) protein is UDP-N-acetylmuramate--L-alanine ligase.